The sequence spans 419 residues: L-rhamnose isomerase (419 aa).

Mn(2+) is bound by residues His262, Asp294, and Asp296.

It belongs to the rhamnose isomerase family. In terms of assembly, homotetramer. It depends on Mn(2+) as a cofactor.

It localises to the cytoplasm. The catalysed reaction is L-rhamnopyranose = L-rhamnulose. The protein operates within carbohydrate degradation; L-rhamnose degradation; glycerone phosphate from L-rhamnose: step 1/3. Its function is as follows. Catalyzes the interconversion of L-rhamnose and L-rhamnulose. The chain is L-rhamnose isomerase from Shigella boydii serotype 4 (strain Sb227).